The following is a 325-amino-acid chain: Probable 2-ketogluconate reductase (325 aa).

Residues 158-159, Thr211, 238-240, and Asp264 each bind NAD(+); these read RI and ISR. The active site involves Arg240. Glu269 is an active-site residue. His288 (proton donor) is an active-site residue. 288 to 291 provides a ligand contact to NAD(+); it reads HIGS.

It belongs to the D-isomer specific 2-hydroxyacid dehydrogenase family.

The catalysed reaction is D-gluconate + NADP(+) = 2-dehydro-D-gluconate + NADPH + H(+). This Bacillus subtilis (strain 168) protein is Probable 2-ketogluconate reductase (yvcT).